We begin with the raw amino-acid sequence, 156 residues long: Small ribosomal subunit protein uS7 (156 aa).

The protein belongs to the universal ribosomal protein uS7 family. In terms of assembly, part of the 30S ribosomal subunit. Contacts proteins S9 and S11.

Functionally, one of the primary rRNA binding proteins, it binds directly to 16S rRNA where it nucleates assembly of the head domain of the 30S subunit. Is located at the subunit interface close to the decoding center, probably blocks exit of the E-site tRNA. The chain is Small ribosomal subunit protein uS7 from Xanthobacter autotrophicus (strain ATCC BAA-1158 / Py2).